Consider the following 314-residue polypeptide: Oxaloacetate tautomerase FAHD2A, mitochondrial (314 aa).

Residues 1–84 (MLVSGRRRLL…ATLSVARRAL (84 aa)) constitute a mitochondrion transit peptide. The Mg(2+) site is built by Glu-159, Glu-161, and Asp-190.

The protein belongs to the FAH family. It depends on Mg(2+) as a cofactor. The cofactor is Mn(2+).

The protein resides in the mitochondrion. It catalyses the reaction oxaloacetate = enol-oxaloacetate. Functionally, tautomerase that converts enol-oxaloacetate, a strong inhibitor of succinate dehydrogenase, to the physiological keto form of oxaloacetate. It is thereby required to maximize aerobic respiration efficiency by preventing succinate dehydrogenase inhibition. In Homo sapiens (Human), this protein is Oxaloacetate tautomerase FAHD2A, mitochondrial.